The sequence spans 292 residues: Syntaxin-19 (292 aa).

The region spanning L207–A269 is the t-SNARE coiled-coil homology domain.

This sequence belongs to the syntaxin family. As to quaternary structure, interacts with EGFR. Expressed in stomach, lung and skin (at protein level). In stomach, strongly expressed in the mucosa of the fundus, in epithelial cells of gastric pits, and in gastric glands (at protein level). In skin, expressed in the epidermis, dermis, and epithelial layer of the hair bulb (at protein level).

Its subcellular location is the cell membrane. It is found in the cytoplasm. Its function is as follows. Plays a role in endosomal trafficking of the epidermal growth factor receptor (EGFR). The sequence is that of Syntaxin-19 from Mus musculus (Mouse).